We begin with the raw amino-acid sequence, 282 residues long: Undecaprenyl-diphosphatase (282 aa).

The next 8 membrane-spanning stretches (helical) occupy residues 7-29 (VLFA…HVVI), 45-65 (FLPF…LYFW), 89-109 (GLLL…FALK), 115-135 (LFAS…VLII), 153-173 (LTLR…LPGL), 196-216 (FAFL…VPHL), 229-249 (TALL…AFLM), and 258-278 (WALG…LILI).

The protein belongs to the UppP family.

The protein resides in the cell inner membrane. It catalyses the reaction di-trans,octa-cis-undecaprenyl diphosphate + H2O = di-trans,octa-cis-undecaprenyl phosphate + phosphate + H(+). Functionally, catalyzes the dephosphorylation of undecaprenyl diphosphate (UPP). Confers resistance to bacitracin. The polypeptide is Undecaprenyl-diphosphatase (Acidiphilium cryptum (strain JF-5)).